The chain runs to 1056 residues: Outer capsid protein VP5 (1056 aa).

The protein belongs to the orthoreovirus lambda-2 protein family.

It is found in the virion. The enzyme catalyses a 5'-end diphospho-ribonucleoside in mRNA + GTP + H(+) = a 5'-end (5'-triphosphoguanosine)-ribonucleoside in mRNA + diphosphate. It catalyses the reaction a 5'-end (5'-triphosphoguanosine)-ribonucleoside in mRNA + S-adenosyl-L-methionine = a 5'-end (N(7)-methyl 5'-triphosphoguanosine)-ribonucleoside in mRNA + S-adenosyl-L-homocysteine. In terms of biological role, outer capsid protein involved in mRNA capping. Catalyzes the last 3 enzymatic activities for formation of the 5' cap structure on the viral plus-strand transcripts, namely the RNA guanylyltransferase, RNA-7N- and RNA-2'O-methyltransferase activities. The protein is Outer capsid protein VP5 (S5) of Aedes pseudoscutellaris reovirus (isolate France) (ApRV).